Reading from the N-terminus, the 1091-residue chain is Exonuclease/helicase subunit RexB (1091 aa).

The protein belongs to the helicase family. AddB/RexB type 2 subfamily. As to quaternary structure, heterodimer of RexA (AddA) and RexB. The cofactor is Mg(2+).

Functionally, involved in DNA double-strand break repair. Is not involved in recombination during natural competence or in plasmid establishment. In terms of biological role, the heterodimer acts as both an ATP-dependent DNA helicase and an ATP-dependent, dual-direction single-stranded exonuclease. Recognizes the chi site generating a DNA molecule suitable for the initiation of homologous recombination. This subunit has 5' -&gt; 3' nuclease activity but not helicase activity. The chain is Exonuclease/helicase subunit RexB from Streptococcus pneumoniae serotype 4 (strain ATCC BAA-334 / TIGR4).